The sequence spans 212 residues: ER lumen protein-retaining receptor 2 (212 aa).

The Lumenal segment spans residues 1 to 4 (MNIF). A helical transmembrane segment spans residues 5–24 (RLTGDLSHLAAIIILLLKIW). The Cytoplasmic portion of the chain corresponds to 25 to 32 (KSRSCAGI). A helical membrane pass occupies residues 33 to 52 (SGKSQILFALVFTTRYLDLL). Residues 47 to 48 (RY) are interaction with the K-D-E-L motif on target proteins. Residues 53–58 (TSFISL) lie on the Lumenal side of the membrane. The helical transmembrane segment at 59 to 79 (YNTCMKVIYIGCAYATVYLIY) threads the bilayer. Residues 80-92 (AKFRATYDGNHDT) lie on the Cytoplasmic side of the membrane. Residues 93 to 110 (FRAEFLVVPVGGLAFLVN) form a helical membrane-spanning segment. Residues 111–116 (HDFSPL) lie on the Lumenal side of the membrane. The chain crosses the membrane as a helical span at residues 117 to 135 (EILWTFSIYLESVAILPQL). Residues 136-149 (FMISKTGEAETITT) are Cytoplasmic-facing. The chain crosses the membrane as a helical span at residues 150 to 168 (HYLFCLGVYRALYLFNWIW). An interaction with the K-D-E-L motif on target proteins region spans residues 159–169 (RALYLFNWIWR). The Lumenal portion of the chain corresponds to 169 to 178 (RFYFEGFFDM). Residues 179-199 (IAIVAGVVQTILYCDFFYLYV) traverse the membrane as a helical segment. Residues 200–212 (TKVLKGKKLSLPA) are Cytoplasmic-facing. The segment at 204–207 (KGKK) is important for recycling of cargo proteins with the sequence motif K-D-E-L from the Golgi to the endoplasmic reticulum.

The protein belongs to the ERD2 family.

It localises to the endoplasmic reticulum membrane. Its subcellular location is the golgi apparatus membrane. It is found in the cytoplasmic vesicle. The protein localises to the COPI-coated vesicle membrane. Receptor for the C-terminal sequence motif K-D-E-L that is present on endoplasmic reticulum resident proteins and that mediates their recycling from the Golgi back to the endoplasmic reticulum. Binding is pH dependent, and is optimal at pH 5-5.4. This chain is ER lumen protein-retaining receptor 2 (kdelr2), found in Danio rerio (Zebrafish).